Reading from the N-terminus, the 201-residue chain is Recombination protein RecR (201 aa).

A C4-type zinc finger spans residues 60–75 (CSCCGNVDTSDPCTIC). Positions 83-178 (ATLIVVEDVS…RVTRLAHGVP (96 aa)) constitute a Toprim domain.

The protein belongs to the RecR family.

May play a role in DNA repair. It seems to be involved in an RecBC-independent recombinational process of DNA repair. It may act with RecF and RecO. This chain is Recombination protein RecR, found in Brucella melitensis biotype 1 (strain ATCC 23456 / CCUG 17765 / NCTC 10094 / 16M).